Here is a 312-residue protein sequence, read N- to C-terminus: Olfactory receptor 1500 (312 aa).

Residues 1–25 (MTGNNQTLILEFLLLGLPIPSEYHL) lie on the Extracellular side of the membrane. Asn-5 carries N-linked (GlcNAc...) asparagine glycosylation. The helical transmembrane segment at 26-49 (LFYALFLAMYLTIILGNLLIIVLV) threads the bilayer. Topologically, residues 50–57 (RLDSHLHM) are cytoplasmic. A helical transmembrane segment spans residues 58–79 (PMYLFLSNLSFSDLCFSSVTMP). Residues 80-100 (KLLQNMQSQVPSISYTGCLTQ) lie on the Extracellular side of the membrane. A disulfide bridge connects residues Cys-97 and Cys-189. Residues 101–120 (LYFFMVFGDMESFLLVVMAY) form a helical membrane-spanning segment. Over 121–139 (DRYVAICFPLRYTTIMSTK) the chain is Cytoplasmic. A helical membrane pass occupies residues 140 to 158 (FCASLVLLLWMLTMTHALL). At 159–196 (HTLLIARLSFCEKNVILHFFCDISALLKLSCSDIYVNE) the chain is on the extracellular side. A helical transmembrane segment spans residues 197–219 (LMIYILGGLIIIIPFLLIVMSYV). The Cytoplasmic segment spans residues 220-236 (RIFFSILKFPSIQDIYK). The helical transmembrane segment at 237–260 (VFSTCGSHLSVVTLFYGTIFGIYL) threads the bilayer. At 261–272 (CPSGNNSTVKEI) the chain is on the extracellular side. Residues 273–292 (AMAMMYTVVTPMLNPFIYSL) form a helical membrane-spanning segment. Topologically, residues 293–312 (RNRDMKRALIRVICTKKISL) are cytoplasmic.

This sequence belongs to the G-protein coupled receptor 1 family. As to expression, olfactory epithelium.

It localises to the cell membrane. In terms of biological role, odorant receptor. The chain is Olfactory receptor 1500 (Olr1500) from Rattus norvegicus (Rat).